The following is a 492-amino-acid chain: Pre-mRNA-processing factor 19 (492 aa).

The U-box domain maps to 1 to 72 (MSFVCGISGE…APRNVSGTSI (72 aa)). WD repeat units follow at residues 207 to 246 (HSTGTPGITALDIKGNLSLTGGIDKTVVLYDYEKEQVMQT), 249 to 288 (GHNKKINAVVLHPDNITAISASADSHIRVWSATDSSSKAI), 291 to 330 (VHQAPVTDISLNASGDYILSASDDSYWAFSDIRSGKSLCK), 336 to 375 (GSQIAVHSIEFHPDGLIFGTGAADAVVKIWDLKNQTVAAA), 378 to 417 (GHTAAVRSIAFSENGYYLATGSEDGEVKLWDLRKLKNLKT), and 461 to 491 (DHSGPVTGVRFGENARSLVTCSLDKSLRVFS).

The protein belongs to the WD repeat PRP19 family. As to quaternary structure, homotetramer. Component of the NTC complex (or PRP19-associated complex) which is associated with the spliceosome.

It is found in the nucleus. The protein resides in the nucleoplasm. The enzyme catalyses S-ubiquitinyl-[E2 ubiquitin-conjugating enzyme]-L-cysteine + [acceptor protein]-L-lysine = [E2 ubiquitin-conjugating enzyme]-L-cysteine + N(6)-ubiquitinyl-[acceptor protein]-L-lysine.. The protein operates within protein modification; protein ubiquitination. Probable ubiquitin-protein ligase which is mainly involved pre-mRNA splicing and DNA repair. Core component of the NTC/Nineteen complex which is part of the spliceosome and participates in its assembly, its remodeling and is required for its activity. Together with emb-4, necessary for interaction of rnp-4, a probable exon junction complex component, with mRNAs and spliceosomal snRNAs. Plays a role in nuclear retention of unspliced mRNAs. The polypeptide is Pre-mRNA-processing factor 19 (prp-19) (Caenorhabditis elegans).